Reading from the N-terminus, the 257-residue chain is MLLVVDVGNTNTVFGIFENGNKIPLFHKRTVTRKDRTSDELGLFFRGFLREFKIENEMITGGIYSSVVPTLNPILDRMFQDWFKIEAIRVHYQMKLPFSISYPRPYEIGADRLVNAATCAIDFPGKSIIIDLGTATTFCVVNEKPEYLGGVIAPGLKVSMDALTRNTSQLPPIVFQSPGKILGDSTIESIQAGFFFGWIGLLEGIIREIKKDKGQDYQVIGTGGLVTVIDAAHPGIFDKIDPLLTLRGLQILHLMNS.

Residue 6 to 13 (DVGNTNTV) coordinates ATP. Substrate contacts are provided by residues Tyr102 and 109–112 (GADR). Asp111 functions as the Proton acceptor in the catalytic mechanism. K(+) is bound at residue Asp131. Thr134 serves as a coordination point for ATP. Thr186 provides a ligand contact to substrate.

This sequence belongs to the type III pantothenate kinase family. As to quaternary structure, homodimer. Requires NH4(+) as cofactor. The cofactor is K(+).

It is found in the cytoplasm. It catalyses the reaction (R)-pantothenate + ATP = (R)-4'-phosphopantothenate + ADP + H(+). Its pathway is cofactor biosynthesis; coenzyme A biosynthesis; CoA from (R)-pantothenate: step 1/5. Functionally, catalyzes the phosphorylation of pantothenate (Pan), the first step in CoA biosynthesis. The polypeptide is Type III pantothenate kinase (Leptospira interrogans serogroup Icterohaemorrhagiae serovar copenhageni (strain Fiocruz L1-130)).